A 1430-amino-acid chain; its full sequence is MGARASILSGGKLDEWEKIQLRPGGKKRYKMKHLIWASRELERFALDPGLLETSEGCQKIIRQLQPSLQTGSEELKSLFNTVAVLYYVHQRAGVTDTKEALDKLEEEQNKSQQKTQQAAADKGVSQNYPIVQNLQGQMVHQSLSPRTLNAWVKVIEEKAFSPEVIPMFSALSEGATPTDLNTMLNTVGGHQAAMQMLKDTINEEAAEWDRLHPVHAGPAPPGQMREPRGSDIAGTTSTLQEQIQWMTGNPPVPVGDIYKRWIILGLNKIVRMYSPVSILDIKQGPKEPFRDYVDRFFKVLRAEQASQDVKGWMTDTLLVQNANPDCKTILKALGTGATLEEMMTACQGVGGPSHKARVLAEAMSQANSAIMMQKSNFKGQRRVVKCFNCGKEGHIARNCRAPRKKGCWKCGREGHQMKDCTERQANFFRENLAFQQGEARKFPSEQTRANSPTSRELRVQRGDNPLSEAGAERRGTVPSLSFPQITLWQRPLVTIKIGGQIKEALLDTGADDTVLEDINLPGKWKPKMIGGIGGFIKVKQYDNILIEICGHKAIGTVLVGPTPVNIIGRNMLTQIGCTLNFPVSPIETVPVKLKPGMDGPKVKQWPLTEEKIKALTEICLEMEKEGKISKIGPENPYNTPVFAIKKKDSSKWRKLVDFKELNKRTQDFWEVQLGIPHPAGLKKKKSVTVLDVGDAYFSVPLDKDFKKYTAFTIPSVNNETPGIRYQYNVLPQGWKGSPAIFQCSMTKILEPFRMKNPDIVIYQYMDDLYVGSDLEIGQHRTKIEELREHLLRWGFTTPDKKHQKEPPFLWMGHELHPDKWTVQPIQLPNKDSWTVNDIQKLVGKLNWASQIYPGIKVRPLCKLLRGAKALTDIVPLTAEAELELAKNREILREPVHGVYYDPSKDLIAEIQKQGDGQWTYQIYQNPFKNLKTGKYAKVRSAHTNDVKQLTEAVQKIALESIVIWGKRSPKFKLPILKETWDTWWTDYWQATWIPEWEFVNTPPLVKLWYQLETEPIAGADTFYVDGASNRETKKGKAGYVTDKGKQKVVSLTETTNQKAELQAIYLALQDSGSEVNIVTDSQYALGIIQAQPDKSESEIVNQIIEQLIQKERVYLSWVPAHKGIGGNEQVDKLVSAGVRKILFLDGIDKAQEEHEKYHNNWRAMASDFNLPPIVAKEIVASCDKCQLKGEAMHGQVDCSPGIWQLDCTHLEGKVILVAVHVASEYIEAEVIPAETGQETAYFILKLAGRWPVKIIHTDNGSNFTSAAVKASCWWAGIQQEFGIPYNPQSQGVVESINKELKKIIGQVRDQAEHLKTAVQMAVFIHNFKRKGGIGGYSAGERIIDIISTDIQTRELQKQITKIQNFRVYYRDSRNPVWKGPAKLLWKGEGAVVIQDNSEIKIVPRRKAKIIRDYGKQMAVDDCVAGRQDED.

The N-myristoyl glycine; by host moiety is linked to residue G2. Positions I7–M31 are interaction with Gp41. The interaction with host CALM1 stretch occupies residues L8 to R43. Positions K12–I19 are interaction with host AP3D1. Residues D14–H33 form an interaction with membrane phosphatidylinositol 4,5-bisphosphate and RNA region. The Nuclear export signal motif lies at W16–R22. The Nuclear localization signal motif lies at K26–K32. The interaction with membrane phosphatidylinositol 4,5-bisphosphate stretch occupies residues E73–S77. Y128 is modified (phosphotyrosine; by host). Residues N185–Q223 form an interaction with human PPIA/CYPA and NUP153 region. The segment at Y273–L359 is dimerization/Multimerization of capsid protein p24. 2 CCHC-type zinc fingers span residues V384–A401 and K405–E422. Residues E438 to G475 form a disordered region. The span at S444–S454 shows a compositional bias: polar residues. The dimerization of protease stretch occupies residues P483–L487. Residues K502 to M571 form the Peptidase A2 domain. The active-site For protease activity; shared with dimeric partner is D507. Dimerization of protease stretches follow at residues G531 to K537 and N570 to P582. The 191-residue stretch at E625–L815 folds into the Reverse transcriptase domain. Mg(2+) is bound by residues D691, D766, and D767. The segment at F808 to H816 is RT 'primer grip'. A Tryptophan repeat motif motif is present at residues W980 to W996. Residues I1016–R1139 enclose the RNase H type-1 domain. Residues D1025, E1060, D1080, and D1131 each coordinate Mg(2+). The Integrase-type zinc-finger motif lies at D1145–Q1186. Residues H1154, H1158, C1182, and C1185 each contribute to the Zn(2+) site. The 151-residue stretch at V1196 to I1346 folds into the Integrase catalytic domain. D1206, D1258, and E1294 together coordinate Mg(2+). Positions F1365–D1412 form a DNA-binding region, integrase-type.

As to quaternary structure, homotrimer; further assembles as hexamers of trimers. Interacts with gp41 (via C-terminus). Interacts with host CALM1; this interaction induces a conformational change in the Matrix protein, triggering exposure of the myristate group. Interacts with host AP3D1; this interaction allows the polyprotein trafficking to multivesicular bodies during virus assembly. Part of the pre-integration complex (PIC) which is composed of viral genome, matrix protein, Vpr and integrase. Homodimer; the homodimer further multimerizes as homohexamers or homopentamers. Interacts with human PPIA/CYPA; This interaction stabilizes the capsid. Interacts with human NUP153. Interacts with host PDZD8; this interaction stabilizes the capsid. Interacts with monkey TRIM5; this interaction destabilizes the capsid. In terms of assembly, homodimer, whose active site consists of two apposed aspartic acid residues. As to quaternary structure, heterodimer of p66 RT and p51 RT (RT p66/p51). Heterodimerization of RT is essential for DNA polymerase activity. The overall folding of the subdomains is similar in p66 RT and p51 RT but the spatial arrangements of the subdomains are dramatically different. Homotetramer; may further associate as a homohexadecamer. Part of the pre-integration complex (PIC) which is composed of viral genome, matrix protein, Vpr and integrase. Interacts with human SMARCB1/INI1 and human PSIP1/LEDGF isoform 1. Interacts with human KPNA3; this interaction might play a role in nuclear import of the pre-integration complex. Interacts with human NUP153; this interaction might play a role in nuclear import of the pre-integration complex. Requires Mg(2+) as cofactor. Post-translationally, specific enzymatic cleavages by the viral protease yield mature proteins. The protease is released by autocatalytic cleavage. The polyprotein is cleaved during and after budding, this process is termed maturation. Proteolytic cleavage of p66 RT removes the RNase H domain to yield the p51 RT subunit. Nucleocapsid protein p7 might be further cleaved after virus entry. In terms of processing, tyrosine phosphorylated presumably in the virion by a host kinase. Phosphorylation is apparently not a major regulator of membrane association. Phosphorylated possibly by host MAPK1; this phosphorylation is necessary for Pin1-mediated virion uncoating. Post-translationally, methylated by host PRMT6, impairing its function by reducing RNA annealing and the initiation of reverse transcription.

It localises to the host cell membrane. The protein localises to the host endosome. Its subcellular location is the host multivesicular body. The protein resides in the virion membrane. It is found in the host nucleus. It localises to the host cytoplasm. The protein localises to the virion. It carries out the reaction Specific for a P1 residue that is hydrophobic, and P1' variable, but often Pro.. The catalysed reaction is Endohydrolysis of RNA in RNA/DNA hybrids. Three different cleavage modes: 1. sequence-specific internal cleavage of RNA. Human immunodeficiency virus type 1 and Moloney murine leukemia virus enzymes prefer to cleave the RNA strand one nucleotide away from the RNA-DNA junction. 2. RNA 5'-end directed cleavage 13-19 nucleotides from the RNA end. 3. DNA 3'-end directed cleavage 15-20 nucleotides away from the primer terminus.. The enzyme catalyses 3'-end directed exonucleolytic cleavage of viral RNA-DNA hybrid.. It catalyses the reaction DNA(n) + a 2'-deoxyribonucleoside 5'-triphosphate = DNA(n+1) + diphosphate. Protease: The viral protease is inhibited by many synthetic protease inhibitors (PIs), such as amprenavir, atazanavir, indinavir, loprinavir, nelfinavir, ritonavir and saquinavir. Use of protease inhibitors in tritherapy regimens permit more ambitious therapeutic strategies. Reverse transcriptase/ribonuclease H: RT can be inhibited either by nucleoside RT inhibitors (NRTIs) or by non nucleoside RT inhibitors (NNRTIs). NRTIs act as chain terminators, whereas NNRTIs inhibit DNA polymerization by binding a small hydrophobic pocket near the RT active site and inducing an allosteric change in this region. Classical NRTIs are abacavir, adefovir (PMEA), didanosine (ddI), lamivudine (3TC), stavudine (d4T), tenofovir (PMPA), zalcitabine (ddC), and zidovudine (AZT). Classical NNRTIs are atevirdine (BHAP U-87201E), delavirdine, efavirenz (DMP-266), emivirine (I-EBU), and nevirapine (BI-RG-587). The tritherapies used as a basic effective treatment of AIDS associate two NRTIs and one NNRTI. Functionally, mediates, with Gag polyprotein, the essential events in virion assembly, including binding the plasma membrane, making the protein-protein interactions necessary to create spherical particles, recruiting the viral Env proteins, and packaging the genomic RNA via direct interactions with the RNA packaging sequence (Psi). Gag-Pol polyprotein may regulate its own translation, by the binding genomic RNA in the 5'-UTR. At low concentration, the polyprotein would promote translation, whereas at high concentration, the polyprotein would encapsidate genomic RNA and then shut off translation. Targets the polyprotein to the plasma membrane via a multipartite membrane-binding signal, that includes its myristoylated N-terminus. Matrix protein is part of the pre-integration complex. Implicated in the release from host cell mediated by Vpu. Binds to RNA. In terms of biological role, forms the conical core that encapsulates the genomic RNA-nucleocapsid complex in the virion. Most core are conical, with only 7% tubular. The core is constituted by capsid protein hexamer subunits. The core is disassembled soon after virion entry. Host restriction factors such as TRIM5-alpha or TRIMCyp bind retroviral capsids and cause premature capsid disassembly, leading to blocks in reverse transcription. Capsid restriction by TRIM5 is one of the factors which restricts HIV-1 to the human species. Host PIN1 apparently facilitates the virion uncoating. On the other hand, interactions with PDZD8 or CYPA stabilize the capsid. Its function is as follows. Encapsulates and protects viral dimeric unspliced genomic RNA (gRNA). Binds these RNAs through its zinc fingers. Acts as a nucleic acid chaperone which is involved in rearangement of nucleic acid secondary structure during gRNA retrotranscription. Also facilitates template switch leading to recombination. As part of the polyprotein, participates in gRNA dimerization, packaging, tRNA incorporation and virion assembly. Functionally, aspartyl protease that mediates proteolytic cleavages of Gag and Gag-Pol polyproteins during or shortly after the release of the virion from the plasma membrane. Cleavages take place as an ordered, step-wise cascade to yield mature proteins. This process is called maturation. Displays maximal activity during the budding process just prior to particle release from the cell. Also cleaves Nef and Vif, probably concomitantly with viral structural proteins on maturation of virus particles. Hydrolyzes host EIF4GI and PABP1 in order to shut off the capped cellular mRNA translation. The resulting inhibition of cellular protein synthesis serves to ensure maximal viral gene expression and to evade host immune response. Also mediates cleavage of host YTHDF3. Mediates cleavage of host CARD8, thereby activating the CARD8 inflammasome, leading to the clearance of latent HIV-1 in patient CD4(+) T-cells after viral reactivation; in contrast, HIV-1 can evade CARD8-sensing when its protease remains inactive in infected cells prior to viral budding. Multifunctional enzyme that converts the viral RNA genome into dsDNA in the cytoplasm, shortly after virus entry into the cell. This enzyme displays a DNA polymerase activity that can copy either DNA or RNA templates, and a ribonuclease H (RNase H) activity that cleaves the RNA strand of RNA-DNA heteroduplexes in a partially processive 3' to 5' endonucleasic mode. Conversion of viral genomic RNA into dsDNA requires many steps. A tRNA(3)-Lys binds to the primer-binding site (PBS) situated at the 5'-end of the viral RNA. RT uses the 3' end of the tRNA primer to perform a short round of RNA-dependent minus-strand DNA synthesis. The reading proceeds through the U5 region and ends after the repeated (R) region which is present at both ends of viral RNA. The portion of the RNA-DNA heteroduplex is digested by the RNase H, resulting in a ssDNA product attached to the tRNA primer. This ssDNA/tRNA hybridizes with the identical R region situated at the 3' end of viral RNA. This template exchange, known as minus-strand DNA strong stop transfer, can be either intra- or intermolecular. RT uses the 3' end of this newly synthesized short ssDNA to perform the RNA-dependent minus-strand DNA synthesis of the whole template. RNase H digests the RNA template except for two polypurine tracts (PPTs) situated at the 5'-end and near the center of the genome. It is not clear if both polymerase and RNase H activities are simultaneous. RNase H probably can proceed both in a polymerase-dependent (RNA cut into small fragments by the same RT performing DNA synthesis) and a polymerase-independent mode (cleavage of remaining RNA fragments by free RTs). Secondly, RT performs DNA-directed plus-strand DNA synthesis using the PPTs that have not been removed by RNase H as primers. PPTs and tRNA primers are then removed by RNase H. The 3' and 5' ssDNA PBS regions hybridize to form a circular dsDNA intermediate. Strand displacement synthesis by RT to the PBS and PPT ends produces a blunt ended, linear dsDNA copy of the viral genome that includes long terminal repeats (LTRs) at both ends. In terms of biological role, catalyzes viral DNA integration into the host chromosome, by performing a series of DNA cutting and joining reactions. This enzyme activity takes place after virion entry into a cell and reverse transcription of the RNA genome in dsDNA. The first step in the integration process is 3' processing. This step requires a complex comprising the viral genome, matrix protein, Vpr and integrase. This complex is called the pre-integration complex (PIC). The integrase protein removes 2 nucleotides from each 3' end of the viral DNA, leaving recessed CA OH's at the 3' ends. In the second step, the PIC enters cell nucleus. This process is mediated through integrase and Vpr proteins, and allows the virus to infect a non dividing cell. This ability to enter the nucleus is specific of lentiviruses, other retroviruses cannot and rely on cell division to access cell chromosomes. In the third step, termed strand transfer, the integrase protein joins the previously processed 3' ends to the 5' ends of strands of target cellular DNA at the site of integration. The 5'-ends are produced by integrase-catalyzed staggered cuts, 5 bp apart. A Y-shaped, gapped, recombination intermediate results, with the 5'-ends of the viral DNA strands and the 3' ends of target DNA strands remaining unjoined, flanking a gap of 5 bp. The last step is viral DNA integration into host chromosome. This involves host DNA repair synthesis in which the 5 bp gaps between the unjoined strands are filled in and then ligated. Since this process occurs at both cuts flanking the HIV genome, a 5 bp duplication of host DNA is produced at the ends of HIV-1 integration. Alternatively, Integrase may catalyze the excision of viral DNA just after strand transfer, this is termed disintegration. This Homo sapiens (Human) protein is Gag-Pol polyprotein (gag-pol).